We begin with the raw amino-acid sequence, 205 residues long: Large ribosomal subunit protein uL10 (205 aa).

The segment at 167 to 205 (AQGAAPAEAKAEAPASEEKAADTPAEQPAESAPEAAPEA) is disordered. Low complexity-rich tracts occupy residues 169–180 (GAAPAEAKAEAP) and 190–205 (PAEQ…APEA).

Belongs to the universal ribosomal protein uL10 family. Part of the ribosomal stalk of the 50S ribosomal subunit. The N-terminus interacts with L11 and the large rRNA to form the base of the stalk. The C-terminus forms an elongated spine to which L12 dimers bind in a sequential fashion forming a multimeric L10(L12)X complex.

Its function is as follows. Forms part of the ribosomal stalk, playing a central role in the interaction of the ribosome with GTP-bound translation factors. This is Large ribosomal subunit protein uL10 from Treponema denticola (strain ATCC 35405 / DSM 14222 / CIP 103919 / JCM 8153 / KCTC 15104).